Consider the following 240-residue polypeptide: ATP-dependent dethiobiotin synthetase BioD (240 aa).

15–20 contributes to the ATP binding site; it reads EIGKTF. T19 is a binding site for Mg(2+). K40 is a catalytic residue. ATP is bound by residues D57, 118–121, and 178–179; these read EGVG and NR. Mg(2+)-binding residues include D57 and E118.

The protein belongs to the dethiobiotin synthetase family. Homodimer. It depends on Mg(2+) as a cofactor.

Its subcellular location is the cytoplasm. The catalysed reaction is (7R,8S)-7,8-diammoniononanoate + CO2 + ATP = (4R,5S)-dethiobiotin + ADP + phosphate + 3 H(+). Its pathway is cofactor biosynthesis; biotin biosynthesis; biotin from 7,8-diaminononanoate: step 1/2. Functionally, catalyzes a mechanistically unusual reaction, the ATP-dependent insertion of CO2 between the N7 and N8 nitrogen atoms of 7,8-diaminopelargonic acid (DAPA, also called 7,8-diammoniononanoate) to form a ureido ring. This Burkholderia pseudomallei (strain K96243) protein is ATP-dependent dethiobiotin synthetase BioD.